We begin with the raw amino-acid sequence, 388 residues long: MKTATFSTLLALSASAVNAQVSGTAFGFAAGTTGGGSAAPETPSSIDELVEWLTDDTARTIMIDRTWDFTGTEGTTDGQCCSTRTTTCEGGTSAGQAWIQDTCDDGTWVSCTYDNAAKNPINVGSNKSIVGVGSDGVLKGKGLRITGGNSNVIIQNIHITDLNPQYVWGGDAITLDDADLVWIDHNKISLIGRQFIVSGWGKAGRVTISNNEFDGVTDWSAGCNGKHYWTLLLIGEQDFYTFSDNWVHDVSGRAPHMGTDMTESTIFFHGVNNYFQNIGGHAFDIDTNTWALLEGNYFESVDTPLTETSLTSGALIYNVPTVDSASACTSPLGYICEWNRLAGSGTWTERTDADVLTMASQYIDSLIDHIPVADVPTTVVANAGVGKL.

Residues 1–19 form the signal peptide; sequence MKTATFSTLLALSASAVNA. A disulfide bridge connects residues C80 and C103. N126 carries N-linked (GlcNAc...) asparagine glycosylation. Residue R253 is part of the active site. A disulfide bridge links C328 with C336.

It belongs to the polysaccharide lyase 1 family.

It localises to the secreted. The catalysed reaction is Eliminative cleavage of (1-&gt;4)-alpha-D-galacturonan methyl ester to give oligosaccharides with 4-deoxy-6-O-methyl-alpha-D-galact-4-enuronosyl groups at their non-reducing ends.. Pectinolytic enzymes consist of four classes of enzymes: pectin lyase, polygalacturonase, pectin methylesterase and rhamnogalacturonase. Among pectinolytic enzymes, pectin lyase is the most important in depolymerization of pectin, since it cleaves internal glycosidic bonds of highly methylated pectins. The chain is Probable pectin lyase F-1 (pelF-1) from Aspergillus terreus (strain NIH 2624 / FGSC A1156).